The sequence spans 137 residues: Putative pre-16S rRNA nuclease (137 aa).

The protein belongs to the YqgF nuclease family.

It localises to the cytoplasm. Its function is as follows. Could be a nuclease involved in processing of the 5'-end of pre-16S rRNA. In Actinobacillus pleuropneumoniae serotype 5b (strain L20), this protein is Putative pre-16S rRNA nuclease.